Reading from the N-terminus, the 197-residue chain is Imidazoleglycerol-phosphate dehydratase (197 aa).

This sequence belongs to the imidazoleglycerol-phosphate dehydratase family.

It localises to the cytoplasm. The catalysed reaction is D-erythro-1-(imidazol-4-yl)glycerol 3-phosphate = 3-(imidazol-4-yl)-2-oxopropyl phosphate + H2O. The protein operates within amino-acid biosynthesis; L-histidine biosynthesis; L-histidine from 5-phospho-alpha-D-ribose 1-diphosphate: step 6/9. The sequence is that of Imidazoleglycerol-phosphate dehydratase from Pseudomonas fluorescens (strain Pf0-1).